Here is a 77-residue protein sequence, read N- to C-terminus: Putative neurotoxin 3 (77 aa).

Residues 1–25 form the signal peptide; sequence MKAFIAILSIAIVLLLIVSIKETSA. Positions 26–46 are excised as a propeptide; the sequence is KDCKQECVKRYTNGDLTNFLK.

The protein belongs to the scolopendra neurotoxin 3 family. In terms of processing, contains 2 disulfide bonds. As to expression, expressed by the venom gland.

The protein localises to the secreted. This chain is Putative neurotoxin 3, found in Scolopendra mutilans (Chinese red-headed centipede).